Here is an 894-residue protein sequence, read N- to C-terminus: MAKNRFLLIIAAVFVVLPAALSLITFYTDWLFFRETGYTQVFTTALAAKVGAGLASGLFMFAFAMVNLYFANRASLPHTPRGVFFEGGNVYRLQRDEMVQMVKPLSILAALVLSLLAGRWGALQWQNLLLFTNGVTVGTSDPIMGKDLGFYLFSLPLLEHVKGFVAFTVLVTGIMVGAVYFFRGGIILSDRGADVDGAVRRHLAILLGIFSLTLATGFYLDAVRLLLAGGNSFHGAGYVDVNARLPLYRILTLATPLAGAVVAFGLWKGAWRLTLIPPIIVAAVYGIGIVGYPAMLQKFKVAPNELALETPYIANSIRFTRLGYDLDKIKTVPFDVELNLSAADIAKNDATIRNIRLWDHGPLLKTYSQLQQIRTYYKFFDVDNDRYLVNGQYTQVMLSPRELSYNDLPSRNWINERLIFTHGNGLAVGPVSRISREGLPEFFIKDIPAVSLADIRVTRPEIYYGELSNDYVIVGTKVPEFSYPTATGNINTTYGGKGGVALDSMLRKALFAARFKTEKILLSSDITDQSRILYYRTVGERVKTVAPFIRFDGDPYLVVADNGTLKWIIDGYTHSSRLPYSKPLRGGINYMRNSVKAVVDAYDGTLDFYISDPDDVMIKVYARIFPGLFKPLSAMSADLRGHIRYPHQFLQVQAAMFATYHMTDPKVFYNRENLWEIPVLGEAPMEPYYTVMKLPGEAREEYILLLPFTPSKRDNLAAWLTARCDGENYGKLLAYTFPRDRLIYGPKQIDARINQDSHISQQLTLWSQRGSQVIRGSMLVIPIEQSLLYVQPLFLAAADKAGLPELRRVIVAYGDEVVMEESLELALQRIFGGKRAPVAGVAAAPEDGKASTGDLAREAMSIFERATNLQRQGDWAGYGEELRKLQQVLKQLAR.

Transmembrane regions (helical) follow at residues 6–26, 50–70, 98–118, 162–182, 203–223, 250–270, and 275–295; these read FLLIIAAVFVVLPAALSLITF, VGAGLASGLFMFAFAMVNLYF, MVQMVKPLSILAALVLSLLAG, KGFVAFTVLVTGIMVGAVYFF, LAILLGIFSLTLATGFYLDAV, ILTLATPLAGAVVAFGLWKGA, and LIPPIIVAAVYGIGIVGYPAM.

The protein belongs to the UPF0182 family.

Its subcellular location is the cell membrane. This Geobacter sulfurreducens (strain ATCC 51573 / DSM 12127 / PCA) protein is UPF0182 protein GSU2333.